The sequence spans 513 residues: Probable helicase MJ1565 (513 aa).

ATP contacts are provided by residues R151, 160-165, and 467-468; these read GMGKSN and KV.

Belongs to the HerA family.

The enzyme catalyses Couples ATP hydrolysis with the unwinding of duplex DNA at the replication fork by translocating in the 5'-3' direction. This creates two antiparallel DNA single strands (ssDNA). The leading ssDNA polymer is the template for DNA polymerase III holoenzyme which synthesizes a continuous strand.. It catalyses the reaction ATP + H2O = ADP + phosphate + H(+). It carries out the reaction Couples ATP hydrolysis with the unwinding of duplex DNA by translocating in the 3'-5' direction.. Functionally, a probably bidirectional DNA helicase. The protein is Probable helicase MJ1565 of Methanocaldococcus jannaschii (strain ATCC 43067 / DSM 2661 / JAL-1 / JCM 10045 / NBRC 100440) (Methanococcus jannaschii).